Reading from the N-terminus, the 235-residue chain is Uridylate kinase (235 aa).

9 to 12 (KLSG) contributes to the ATP binding site. The segment at 17–22 (GNQGYG) is involved in allosteric activation by GTP. Gly-51 serves as a coordination point for UMP. ATP contacts are provided by Gly-52 and Arg-56. Residues Asp-71 and 132–139 (CGNPFFTT) contribute to the UMP site. ATP contacts are provided by Thr-159, Tyr-165, and Asp-168.

The protein belongs to the UMP kinase family. As to quaternary structure, homohexamer.

It localises to the cytoplasm. The catalysed reaction is UMP + ATP = UDP + ADP. The protein operates within pyrimidine metabolism; CTP biosynthesis via de novo pathway; UDP from UMP (UMPK route): step 1/1. Allosterically activated by GTP. Inhibited by UTP. In terms of biological role, catalyzes the reversible phosphorylation of UMP to UDP. In Synechococcus sp. (strain CC9311), this protein is Uridylate kinase.